The sequence spans 75 residues: Putative DNA-directed RNA polymerase subunit omega (75 aa).

Belongs to the RNA polymerase subunit omega family.

The protein localises to the plastid. The protein resides in the chloroplast. It carries out the reaction RNA(n) + a ribonucleoside 5'-triphosphate = RNA(n+1) + diphosphate. Its function is as follows. May be involved in RNA polymerase activity. In Pyropia yezoensis (Susabi-nori), this protein is Putative DNA-directed RNA polymerase subunit omega.